The chain runs to 348 residues: Large ribosomal subunit protein uL3m (348 aa).

The N-terminal 40 residues, 1-40 (MPGWRLLTQVGAQVLGRLGDGLGAALGPGNRTHIWLFVRG), are a transit peptide targeting the mitochondrion.

This sequence belongs to the universal ribosomal protein uL3 family. As to quaternary structure, component of the mitochondrial large ribosomal subunit (mt-LSU). Mature mammalian 55S mitochondrial ribosomes consist of a small (28S) and a large (39S) subunit. The 28S small subunit contains a 12S ribosomal RNA (12S mt-rRNA) and 30 different proteins. The 39S large subunit contains a 16S rRNA (16S mt-rRNA), a copy of mitochondrial valine transfer RNA (mt-tRNA(Val)), which plays an integral structural role, and 52 different proteins.

Its subcellular location is the mitochondrion. This chain is Large ribosomal subunit protein uL3m (MRPL3), found in Homo sapiens (Human).